Here is a 500-residue protein sequence, read N- to C-terminus: L-arabinose isomerase (500 aa).

Residues Glu306, Glu333, His350, and His450 each contribute to the Mn(2+) site.

Belongs to the arabinose isomerase family. In terms of assembly, homohexamer. Requires Mn(2+) as cofactor.

The catalysed reaction is beta-L-arabinopyranose = L-ribulose. The protein operates within carbohydrate degradation; L-arabinose degradation via L-ribulose; D-xylulose 5-phosphate from L-arabinose (bacterial route): step 1/3. Functionally, catalyzes the conversion of L-arabinose to L-ribulose. The protein is L-arabinose isomerase of Klebsiella pneumoniae subsp. pneumoniae (strain ATCC 700721 / MGH 78578).